A 302-amino-acid polypeptide reads, in one-letter code: Alpha-N-acetyl-neuraminyl-2,3-beta-galactosyl-1,3-N-acetyl-galactosaminide alpha-2,6-sialyltransferase (302 aa).

The Cytoplasmic portion of the chain corresponds to 1-6 (MKAPGR). The chain crosses the membrane as a helical; Signal-anchor for type II membrane protein span at residues 7–27 (LVLIILCSVVFSAVYILLCCW). Over 28–302 (AGLPLCLATC…VFAHPSWRTE (275 aa)) the chain is Lumenal. A disulfide bond links Cys-76 and Cys-225. N-linked (GlcNAc...) asparagine glycosylation is present at Asn-135.

The protein belongs to the glycosyltransferase 29 family. In terms of tissue distribution, ubiquitous.

Its subcellular location is the golgi apparatus membrane. It carries out the reaction an alpha-Neu5Ac-(2-&gt;3)-beta-D-Gal-(1-&gt;3)-D-GlcNAc derivative + CMP-N-acetyl-beta-neuraminate = an alpha-Neu5Ac-(2-&gt;3)-beta-D-Gal-(1-&gt;3)-[alpha-Neu5Ac-(2-&gt;6)]-D-GlcNAc derivative + CMP + H(+). The catalysed reaction is N-acetyl-alpha-neuraminosyl-(2-&gt;3)-beta-D-galactosyl-(1-&gt;3)-N-acetyl-D-galactosamine + CMP-N-acetyl-beta-neuraminate = N-acetyl-alpha-neuraminosyl-(2-&gt;3)-beta-D-galactosyl-(1-&gt;3)-[N-acetyl-alpha-neuraminosyl-(2-&gt;6)]-N-acetyl-D-galactosamine + CMP + H(+). It catalyses the reaction a ganglioside GM1b (d18:1(4E)) + CMP-N-acetyl-beta-neuraminate = a ganglioside GD1alpha (d18:1(4E)) + CMP + H(+). The enzyme catalyses 3-O-[alpha-Neu5Ac-(2-&gt;3)-beta-D-Gal-(1-&gt;3)-alpha-D-GalNAc]-L-Ser-[protein] + CMP-N-acetyl-beta-neuraminate = a 3-O-{alpha-Neu5Ac-(2-&gt;3)-beta-D-Gal-(1-&gt;3)-[alpha-Neu5Ac-(2-&gt;6)]-alpha-D-GalNAc}-L-seryl-[protein] + CMP + H(+). It carries out the reaction 3-O-[alpha-Neu5Ac-(2-&gt;3)-beta-D-Gal-(1-&gt;3)-alpha-D-GalNAc]-L-Thr-[protein] + CMP-N-acetyl-beta-neuraminate = a 3-O-{alpha-Neu5Ac-(2-&gt;3)-beta-D-Gal-(1-&gt;3)-[alpha-Neu5Ac-(2-&gt;6)]-alpha-D-GalNAc}-L-threonyl-[protein] + CMP + H(+). Its pathway is protein modification; protein glycosylation. The protein operates within glycolipid biosynthesis. Transfers the sialyl group (N-acetyl-alpha-neuraminyl or NeuAc) from CMP-NeuAc to the GalNAc residue on the NeuAc-alpha-2,3-Gal-beta-1,3-GalNAc sequence of glycoproteins and glycolipids forming an alpha-2,6-linkage. Produces branched type disialyl structures by transfer of a sialyl group onto a GalNAc residue inside the backbone core chains. Prefers O-glycans to glycoproteins or glycolipids. In Homo sapiens (Human), this protein is Alpha-N-acetyl-neuraminyl-2,3-beta-galactosyl-1,3-N-acetyl-galactosaminide alpha-2,6-sialyltransferase (ST6GALNAC4).